The sequence spans 394 residues: 3-amino-4-hydroxybenzoate 2-monooxygenase (394 aa).

2 residues coordinate FAD: A16 and R109. The active-site Proton acceptor is the Y214. D287 lines the FAD pocket.

This sequence belongs to the 6-hydroxynicotinate 3-monooxygenase family. FAD is required as a cofactor.

It catalyses the reaction 3-amino-4-hydroxybenzoate + NADPH + O2 + H(+) = 3-amino-2,4-dihydroxybenzoate + NADP(+) + H2O. Its pathway is antibiotic biosynthesis. In terms of biological role, part of a gene cluster involved in the biosynthesis of cremeomycin, a light-sensitive o-diazoquinone with antibacterial and antiproliferative effects. Catalyzes the hydroxylation of 3-amino-4-hydroxybenzoate (3,4-AHBA) to 3-amino-2,4-dihydroxybenzoate (3,2,4-ADHBA). In Streptomyces cremeus, this protein is 3-amino-4-hydroxybenzoate 2-monooxygenase.